The following is a 199-amino-acid chain: Fe/S biogenesis protein NfuA (199 aa).

Positions 151 and 154 each coordinate [4Fe-4S] cluster.

This sequence belongs to the NfuA family. Homodimer. Requires [4Fe-4S] cluster as cofactor.

In terms of biological role, involved in iron-sulfur cluster biogenesis. Binds a 4Fe-4S cluster, can transfer this cluster to apoproteins, and thereby intervenes in the maturation of Fe/S proteins. Could also act as a scaffold/chaperone for damaged Fe/S proteins. The polypeptide is Fe/S biogenesis protein NfuA (Xanthomonas euvesicatoria pv. vesicatoria (strain 85-10) (Xanthomonas campestris pv. vesicatoria)).